Here is a 563-residue protein sequence, read N- to C-terminus: Alpha-humulene synthase (563 aa).

Mg(2+)-binding residues include aspartate 316, aspartate 320, aspartate 461, and glutamate 469. A DDXXD motif motif is present at residues 316–320 (DDIYD).

It belongs to the terpene synthase family. Tpsa subfamily. Mg(2+) serves as cofactor. The cofactor is Mn(2+). Expressed in trichomes, cones and young leaves.

The enzyme catalyses (2E,6E)-farnesyl diphosphate = alpha-humulene + diphosphate. The protein operates within sesquiterpene biosynthesis. Its pathway is secondary metabolite biosynthesis; terpenoid biosynthesis. In terms of biological role, sesquiterpene synthase that catalyzes the formation of alpha-humulene. Can use farnesyl diphosphate (FPP) as substrate, but not geranyl diphosphate (GPP) or geranylgeranyl diphosphate (GGPP). This chain is Alpha-humulene synthase, found in Humulus lupulus (European hop).